The sequence spans 500 residues: L-arabinose isomerase (500 aa).

Mn(2+)-binding residues include Glu-306, Glu-333, His-350, and His-450.

Belongs to the arabinose isomerase family. Homohexamer. It depends on Mn(2+) as a cofactor.

It carries out the reaction beta-L-arabinopyranose = L-ribulose. Its pathway is carbohydrate degradation; L-arabinose degradation via L-ribulose; D-xylulose 5-phosphate from L-arabinose (bacterial route): step 1/3. In terms of biological role, catalyzes the conversion of L-arabinose to L-ribulose. In Escherichia coli O139:H28 (strain E24377A / ETEC), this protein is L-arabinose isomerase.